The primary structure comprises 200 residues: Large ribosomal subunit protein uL4 (200 aa).

The disordered stretch occupies residues Thr-42 to Gly-65.

This sequence belongs to the universal ribosomal protein uL4 family. Part of the 50S ribosomal subunit.

One of the primary rRNA binding proteins, this protein initially binds near the 5'-end of the 23S rRNA. It is important during the early stages of 50S assembly. It makes multiple contacts with different domains of the 23S rRNA in the assembled 50S subunit and ribosome. Functionally, forms part of the polypeptide exit tunnel. The polypeptide is Large ribosomal subunit protein uL4 (Vibrio parahaemolyticus serotype O3:K6 (strain RIMD 2210633)).